Reading from the N-terminus, the 501-residue chain is MTNYFPWLTIIVLLPIFAGSLIFFLPHRGNKVIRWYTICICSLELLLTTYTFCYHFQLNDPLTQLTEDYKWINFFDFYWRLGIDGLSIGPILLTGFITTLATLAARPVTRDSRLFHFLMLAMYSGQIGSFSSRDLLLFFIMWELELIPVYLLLAMWGGKKRLYSATKFILYTAGGSIFLLIGVLGIGLYGSNEPTLNLETLSNQSYPVALEIILYIGFLIAFSVKLPIIPLHTWLPDTHGEAHYSTCMLLAGILLKMGAYGLVRINMELLPHAHSIFSPWLIIVGAIQIIYAALTSPGQRNLKKRIAYSSVSHMGFIIIGIGSITDTGLNGAILQIISHGFIGAALFFLAGTSYDRIRLVYLDEMGGMAIHLPKIFTIFSILSMASLALPGMSGFLAELIVFFGIITSHQYLLMPKILITFVMAIGMILTPIYLLSMLRQMFYGYKLFNVPNSYFLDFGPRELFVSISILLPIIAIGIYPDFVLSLSVDKVEAIISNYFYQ.

14 consecutive transmembrane segments (helical) span residues 5–25 (FPWL…IFFL), 38–58 (ICIC…HFQL), 85–105 (GLSI…TLAA), 112–130 (SRLF…IGSF), 135–155 (LLLF…LLAM), 168–188 (FILY…GIGL), 209–229 (ALEI…LPII), 243–263 (HYST…YGLV), 275–295 (SIFS…AALT), 306–326 (IAYS…SITD), 331–351 (GAIL…FLAG), 387–407 (LALP…GIIT), 417–437 (ILIT…LLSM), and 463–483 (LFVS…PDFV).

It belongs to the complex I subunit 4 family.

The protein localises to the plastid. Its subcellular location is the chloroplast thylakoid membrane. The enzyme catalyses a plastoquinone + NADH + (n+1) H(+)(in) = a plastoquinol + NAD(+) + n H(+)(out). It carries out the reaction a plastoquinone + NADPH + (n+1) H(+)(in) = a plastoquinol + NADP(+) + n H(+)(out). The polypeptide is NAD(P)H-quinone oxidoreductase chain 4, chloroplastic (Eucalyptus globulus subsp. globulus (Tasmanian blue gum)).